Consider the following 136-residue polypeptide: Large ribosomal subunit protein uL16c (136 aa).

Belongs to the universal ribosomal protein uL16 family. Part of the 50S ribosomal subunit.

The protein localises to the plastid. The protein resides in the chloroplast. The polypeptide is Large ribosomal subunit protein uL16c (Oryza nivara (Indian wild rice)).